Here is a 546-residue protein sequence, read N- to C-terminus: Capsid protein VP1 (546 aa).

Residues 1–38 (MMMASKDAPQSADGASGAGQLVPEVNTADPLPMEPVAG) form a disordered region. A shell domain region spans residues 1-226 (MMMASKDAPQ…FLFLVPPTIE (226 aa)). The P1 sub-domain 1 stretch occupies residues 227-279 (QKTRAFTVPNIPLQTLSNSRFPSLIQGMILSPDASQVVQFQNGRCLIDGQLLG). A protruding domain region spans residues 227–545 (QKTRAFTVPN…TARGRLGVRR (319 aa)). A P2 sub-domain region spans residues 280 to 416 (TTPATSGQLF…GSSLSQAANL (137 aa)). Residues 417-546 (APPVFPPGFG…ARGRLGVRRI (130 aa)) form a P1 sub-domain 2 region. The segment at 538–545 (RGRLGVRR) is plays a role in binding to host histo-blood group structures antigens and in the formation of P-particles.

It belongs to the caliciviridae capsid protein family. In terms of assembly, homodimer. Homomultimer. Interacts with the minor capsid protein VP2. Interacts (via C-terminus) with host type I histo-blood group structures antigens at the surface of target cells. In terms of processing, may be cleaved by host protease to generate soluble capsid protein. Assembled capsid cannot be cleaved.

It is found in the virion. The protein localises to the host cytoplasm. Capsid protein self assembles to form an icosahedral capsid with a T=3 symmetry, about 38 nm in diameter, and consisting of 180 capsid proteins. A smaller form of capsid with a diameter of 23 nm might be capsid proteins assembled as icosahedron with T=1 symmetry. The capsid encapsulates the genomic RNA and is decorated with VP2 proteins. Attaches virion to target cells by binding histo-blood group antigens (HBGAs) present on gastroduodenal epithelial cells. Its function is as follows. The soluble capsid protein may play a role in viral immunoevasion. This is Capsid protein VP1 from Southampton virus (strain GI/Human/United Kingdom/Southampton/1991) (SHV).